Reading from the N-terminus, the 411-residue chain is Secretion apparatus protein BsaZ (411 aa).

Transmembrane regions (helical) follow at residues 28–48 (IVALIVIATGALAAPALVDLT), 80–100 (IAAPFVLLCAAAGALPSLVQS), 137–157 (ALLYVGVFALTVRVFAGLYHA), and 175–195 (IVLTVRLVLLFLLCALPVLIL). The interval 341–411 (AANRGGPPPE…APARTGDQNA (71 aa)) is disordered. A compositionally biased stretch (low complexity) spans 370-404 (DACADNAFPDDAPPGAAAPNAGSPDGPAPDGGAPA).

This sequence belongs to the type III secretion exporter family.

The protein localises to the cell membrane. Part of the bsa type III secretion system, is involved in the intracellular replication of invading bacteria inside the host cell. Probably necessary for the lysis of the vacuole membrane and escape into the host cell cytoplasm. The protein is Secretion apparatus protein BsaZ (bsaZ) of Burkholderia pseudomallei (strain 1026b).